The sequence spans 104 residues: Meiotically up-regulated gene 150 protein (104 aa).

3 helical membrane passes run 30–50 (FFLKNIIVLSNYLYLLYKAWI), 54–74 (TISLCCDFPLFNFLFIAIPYF), and 84–104 (LLWFLFVSLCFITLSFQSLEI).

It is found in the endoplasmic reticulum membrane. Its function is as follows. Has a role in meiosis. The polypeptide is Meiotically up-regulated gene 150 protein (mug150) (Schizosaccharomyces pombe (strain 972 / ATCC 24843) (Fission yeast)).